Consider the following 377-residue polypeptide: Glutamate 5-kinase (377 aa).

K15 is a binding site for ATP. Positions 56, 143, and 155 each coordinate substrate. 175 to 176 provides a ligand contact to ATP; that stretch reads SD. One can recognise a PUA domain in the interval 281–358; that stretch reads KGTLTIDAGA…PDVLIILGIS (78 aa).

Belongs to the glutamate 5-kinase family.

The protein resides in the cytoplasm. The enzyme catalyses L-glutamate + ATP = L-glutamyl 5-phosphate + ADP. Its pathway is amino-acid biosynthesis; L-proline biosynthesis; L-glutamate 5-semialdehyde from L-glutamate: step 1/2. In terms of biological role, catalyzes the transfer of a phosphate group to glutamate to form L-glutamate 5-phosphate. The sequence is that of Glutamate 5-kinase from Rhodopseudomonas palustris (strain BisA53).